The primary structure comprises 205 residues: High frequency lysogenization protein HflD homolog (205 aa).

The protein belongs to the HflD family.

It is found in the cytoplasm. The protein resides in the cell inner membrane. This chain is High frequency lysogenization protein HflD homolog, found in Shewanella sp. (strain MR-7).